A 252-amino-acid polypeptide reads, in one-letter code: Thiazole synthase (252 aa).

Lys98 serves as the catalytic Schiff-base intermediate with DXP. Residues Gly159, 185–186, and 207–208 each bind 1-deoxy-D-xylulose 5-phosphate; these read AG and AS.

Belongs to the ThiG family. Homotetramer. Forms heterodimers with either ThiH or ThiS.

The protein resides in the cytoplasm. It carries out the reaction [ThiS sulfur-carrier protein]-C-terminal-Gly-aminoethanethioate + 2-iminoacetate + 1-deoxy-D-xylulose 5-phosphate = [ThiS sulfur-carrier protein]-C-terminal Gly-Gly + 2-[(2R,5Z)-2-carboxy-4-methylthiazol-5(2H)-ylidene]ethyl phosphate + 2 H2O + H(+). The protein operates within cofactor biosynthesis; thiamine diphosphate biosynthesis. Its function is as follows. Catalyzes the rearrangement of 1-deoxy-D-xylulose 5-phosphate (DXP) to produce the thiazole phosphate moiety of thiamine. Sulfur is provided by the thiocarboxylate moiety of the carrier protein ThiS. In vitro, sulfur can be provided by H(2)S. In Mycobacterium tuberculosis (strain ATCC 25177 / H37Ra), this protein is Thiazole synthase.